A 457-amino-acid chain; its full sequence is Ig mu chain C region (457 aa).

Positions 1 to 105 (SSSAPLLFPL…GEKEKKVELQ (105 aa)) are CH1. Cys27 and Cys89 form a disulfide bridge. N-linked (GlcNAc...) asparagine glycosylation is found at Asn45 and Asn113. Residues 106-220 (VTPELPPNVS…KNVSSVCMGD (115 aa)) are CH2. Cys136 and Cys200 are disulfide-bonded. N-linked (GlcNAc...) asparagine glycans are attached at residues Asn212, Asn276, and Asn283. A CH3 region spans residues 221–326 (DTSTGISVFL…PLKQSLSRPK (106 aa)). 2 disulfides stabilise this stretch: Cys248–Cys307 and Cys355–Cys417. Positions 327–457 (DVANDPPSVF…VLSDTASTCY (131 aa)) are CH4. N-linked (GlcNAc...) asparagine glycosylation occurs at Asn444.

The polypeptide is Ig mu chain C region (Suncus murinus (Asian house shrew)).